The following is a 574-amino-acid chain: Ribonuclease Y (574 aa).

The chain crosses the membrane as a helical span at residues 1-21; that stretch reads MSLLDLVLLLLVLGLGGVLLL. A KH domain is found at 264–327; the sequence is AVTVVPIPSD…EIARMALEEL (64 aa). The region spanning 390–483 is the HD domain; the sequence is VLKHSIQVAH…VAAADALSAA (94 aa).

The protein belongs to the RNase Y family.

It localises to the cell membrane. Its function is as follows. Endoribonuclease that initiates mRNA decay. The chain is Ribonuclease Y from Thermus thermophilus (strain ATCC BAA-163 / DSM 7039 / HB27).